Consider the following 72-residue polypeptide: Prokaryotic ubiquitin-like protein Pup (72 aa).

Positions 1-10 (MATKDTGGGQ) are enriched in gly residues. Positions 1-45 (MATKDTGGGQQKATRSTEEVEEQAQDAQASEDLAERQEKLSDDVD) are disordered. Positions 10-60 (QQKATRSTEEVEEQAQDAQASEDLAERQEKLSDDVDSVLDEIDDVLEENAE) form a coiled coil. The segment at 28 to 66 (QASEDLAERQEKLSDDVDSVLDEIDDVLEENAEDFVRSF) is ARC ATPase binding. The span at 33–42 (LAERQEKLSD) shows a compositional bias: basic and acidic residues. The residue at position 72 (Gln-72) is a Deamidated glutamine. Gln-72 participates in a covalent cross-link: Isoglutamyl lysine isopeptide (Gln-Lys) (interchain with K-? in acceptor proteins).

Belongs to the prokaryotic ubiquitin-like protein family. In terms of assembly, strongly interacts with the proteasome-associated ATPase ARC through a hydrophobic interface; the interacting region of Pup lies in its C-terminal half. There is one Pup binding site per ARC hexamer ring. Is modified by deamidation of its C-terminal glutamine to glutamate by the deamidase Dop, a prerequisite to the subsequent pupylation process.

It participates in protein degradation; proteasomal Pup-dependent pathway. Protein modifier that is covalently attached to lysine residues of substrate proteins, thereby targeting them for proteasomal degradation. The tagging system is termed pupylation. The sequence is that of Prokaryotic ubiquitin-like protein Pup from Streptomyces griseus subsp. griseus (strain JCM 4626 / CBS 651.72 / NBRC 13350 / KCC S-0626 / ISP 5235).